Consider the following 286-residue polypeptide: E3 ubiquitin-protein ligase RNF170 (286 aa).

Residues 1–52 (MQRYWRFQDNKIQDICFGVLGESWIQRPVMARYYSEGQSLQQDDSFIEGVSD) are Lumenal-facing. A helical membrane pass occupies residues 53 to 73 (QVLVAVVVSLALTATLLYALL). Topologically, residues 74 to 229 (RNVQQNIHPE…GGLFWMFRIR (156 aa)) are cytoplasmic. The RING-type zinc finger occupies 115–158 (CPICLHQASFPVETNCGHLFCGSCIIAYWRYGSWLGAISCPICR). A helical membrane pass occupies residues 230–250 (IMLCLMGAFFYLISPLDFVPE). A251 is a topological domain (lumenal). A helical membrane pass occupies residues 252-272 (LFGILGFLDDFFVIFLLLIYI). The Cytoplasmic segment spans residues 273-286 (SIMYREVITQRLTR).

Constitutively associated with the ERLIN1/ERLIN 2 complex. Interacts with activated ITPR1.

It localises to the endoplasmic reticulum membrane. The catalysed reaction is S-ubiquitinyl-[E2 ubiquitin-conjugating enzyme]-L-cysteine + [acceptor protein]-L-lysine = [E2 ubiquitin-conjugating enzyme]-L-cysteine + N(6)-ubiquitinyl-[acceptor protein]-L-lysine.. It participates in protein modification; protein ubiquitination. E3 ubiquitin-protein ligase that plays an essential role in stimulus-induced inositol 1,4,5-trisphosphate receptor type 1 (ITPR1) ubiquitination and degradation via the endoplasmic reticulum-associated degradation (ERAD) pathway. Also involved in ITPR1 turnover in resting cells. Selectively inhibits the TLR3-triggered innate immune response by promoting the 'Lys-48'-linked polyubiquitination and degradation of TLR3. This Mus musculus (Mouse) protein is E3 ubiquitin-protein ligase RNF170 (Rnf170).